The following is a 455-amino-acid chain: Bifunctional protein GlmU (455 aa).

Positions 1–227 (MGLSVIILAA…CEEVQGVNDR (227 aa)) are pyrophosphorylase. Residues 8-11 (LAAG), lysine 22, glutamine 73, 78-79 (GT), 100-102 (YGD), glycine 137, glutamate 152, asparagine 167, and asparagine 225 each bind UDP-N-acetyl-alpha-D-glucosamine. A Mg(2+)-binding site is contributed by aspartate 102. Asparagine 225 provides a ligand contact to Mg(2+). The interval 228 to 248 (WELTKLERYYQRLMAKKLSLA) is linker. Residues 249–455 (GVTIIDPERF…KGWHRPTKKE (207 aa)) are N-acetyltransferase. UDP-N-acetyl-alpha-D-glucosamine contacts are provided by arginine 332 and lysine 350. Histidine 362 (proton acceptor) is an active-site residue. 2 residues coordinate UDP-N-acetyl-alpha-D-glucosamine: tyrosine 365 and asparagine 376. Acetyl-CoA-binding positions include alanine 379, 385–386 (NY), serine 404, alanine 422, and arginine 439.

This sequence in the N-terminal section; belongs to the N-acetylglucosamine-1-phosphate uridyltransferase family. In the C-terminal section; belongs to the transferase hexapeptide repeat family. As to quaternary structure, homotrimer. It depends on Mg(2+) as a cofactor.

It is found in the cytoplasm. It catalyses the reaction alpha-D-glucosamine 1-phosphate + acetyl-CoA = N-acetyl-alpha-D-glucosamine 1-phosphate + CoA + H(+). The catalysed reaction is N-acetyl-alpha-D-glucosamine 1-phosphate + UTP + H(+) = UDP-N-acetyl-alpha-D-glucosamine + diphosphate. It functions in the pathway nucleotide-sugar biosynthesis; UDP-N-acetyl-alpha-D-glucosamine biosynthesis; N-acetyl-alpha-D-glucosamine 1-phosphate from alpha-D-glucosamine 6-phosphate (route II): step 2/2. It participates in nucleotide-sugar biosynthesis; UDP-N-acetyl-alpha-D-glucosamine biosynthesis; UDP-N-acetyl-alpha-D-glucosamine from N-acetyl-alpha-D-glucosamine 1-phosphate: step 1/1. The protein operates within bacterial outer membrane biogenesis; LPS lipid A biosynthesis. Catalyzes the last two sequential reactions in the de novo biosynthetic pathway for UDP-N-acetylglucosamine (UDP-GlcNAc). The C-terminal domain catalyzes the transfer of acetyl group from acetyl coenzyme A to glucosamine-1-phosphate (GlcN-1-P) to produce N-acetylglucosamine-1-phosphate (GlcNAc-1-P), which is converted into UDP-GlcNAc by the transfer of uridine 5-monophosphate (from uridine 5-triphosphate), a reaction catalyzed by the N-terminal domain. This is Bifunctional protein GlmU from Coxiella burnetii (strain Dugway 5J108-111).